Reading from the N-terminus, the 217-residue chain is Adenylate kinase (217 aa).

ATP is bound at residue 10 to 15 (GAGKGT). Residues 30–59 (STGDIFRSNVSQGTPLGVQAKRYMDAGELV) are NMP. Residues Thr-31, Arg-36, 57–59 (ELV), 85–88 (GFPR), and Gln-92 each bind AMP. Residues 126-163 (GRRTCRGCGKVWHVEFDAPSQEGRCDRCGAELFQRDDD) are LID. Arg-127 lines the ATP pocket. Zn(2+)-binding residues include Cys-130, Cys-133, Cys-150, and Cys-153. 2 residues coordinate AMP: Arg-160 and Arg-171. ATP is bound at residue Gly-199.

Belongs to the adenylate kinase family. Monomer.

It is found in the cytoplasm. It carries out the reaction AMP + ATP = 2 ADP. It participates in purine metabolism; AMP biosynthesis via salvage pathway; AMP from ADP: step 1/1. Functionally, catalyzes the reversible transfer of the terminal phosphate group between ATP and AMP. Plays an important role in cellular energy homeostasis and in adenine nucleotide metabolism. The sequence is that of Adenylate kinase from Salinispora tropica (strain ATCC BAA-916 / DSM 44818 / JCM 13857 / NBRC 105044 / CNB-440).